Consider the following 396-residue polypeptide: Pectate lyase 5 (396 aa).

An N-terminal signal peptide occupies residues 1-25 (MGIKHCCYILYFTLALVTLLQPVRS). An N-linked (GlcNAc...) asparagine glycan is attached at N36. Cysteines 53 and 70 form a disulfide. Positions 193, 217, and 221 each coordinate Ca(2+). Residue R273 is part of the active site.

This sequence belongs to the polysaccharide lyase 1 family. Amb a subfamily. As to quaternary structure, monomer. Requires Ca(2+) as cofactor. In terms of processing, the N-terminus is blocked. As to expression, pollen and flowers.

It carries out the reaction Eliminative cleavage of (1-&gt;4)-alpha-D-galacturonan to give oligosaccharides with 4-deoxy-alpha-D-galact-4-enuronosyl groups at their non-reducing ends.. Its pathway is glycan metabolism; pectin degradation; 2-dehydro-3-deoxy-D-gluconate from pectin: step 2/5. Has pectate lyase activity. The chain is Pectate lyase 5 from Ambrosia artemisiifolia (Common ragweed).